The primary structure comprises 172 residues: NADH-quinone oxidoreductase subunit B 1 (172 aa).

Positions 42, 43, 107, and 137 each coordinate [4Fe-4S] cluster.

Belongs to the complex I 20 kDa subunit family. NDH-1 is composed of 14 different subunits. Subunits NuoB, C, D, E, F, and G constitute the peripheral sector of the complex. The cofactor is [4Fe-4S] cluster.

It localises to the cell inner membrane. The catalysed reaction is a quinone + NADH + 5 H(+)(in) = a quinol + NAD(+) + 4 H(+)(out). Its function is as follows. NDH-1 shuttles electrons from NADH, via FMN and iron-sulfur (Fe-S) centers, to quinones in the respiratory chain. Couples the redox reaction to proton translocation (for every two electrons transferred, four hydrogen ions are translocated across the cytoplasmic membrane), and thus conserves the redox energy in a proton gradient. The protein is NADH-quinone oxidoreductase subunit B 1 of Anaeromyxobacter sp. (strain Fw109-5).